We begin with the raw amino-acid sequence, 162 residues long: Peroxiredoxin-2 (162 aa).

One can recognise a Thioredoxin domain in the interval 4 to 162; that stretch reads IAVGDVLPDG…SSADDILKDL (159 aa). Cys51 acts as the Cysteine sulfenic acid (-SOH) intermediate in catalysis.

This sequence belongs to the peroxiredoxin family. Prx5 subfamily. In terms of assembly, monomer. Homodimer. Glutathionylation of C(P) causes the dimer to dissociate. Subsequent reduction of the mixed disulfide bond leads again to dimerization.

It catalyses the reaction [glutaredoxin]-dithiol + a hydroperoxide = [glutaredoxin]-disulfide + an alcohol + H2O. Its function is as follows. Thiol-specific peroxidase that catalyzes the reduction of hydrogen peroxide and organic hydroperoxides to water and alcohols, respectively. Can reduce H(2)O(2) and short chain organic, fatty acid, and phospholipid hydroperoxides. Plays a role in cell protection against oxidative stress by detoxifying peroxides. In Populus trichocarpa (Western balsam poplar), this protein is Peroxiredoxin-2.